The sequence spans 370 residues: Protein RecA (370 aa).

Positions 1 to 20 are disordered; it reads MSFEERRKKDSKESSSKEKD. 78-85 serves as a coordination point for ATP; sequence GPESSGKT.

This sequence belongs to the RecA family.

The protein resides in the cytoplasm. In terms of biological role, can catalyze the hydrolysis of ATP in the presence of single-stranded DNA, the ATP-dependent uptake of single-stranded DNA by duplex DNA, and the ATP-dependent hybridization of homologous single-stranded DNAs. It interacts with LexA causing its activation and leading to its autocatalytic cleavage. The sequence is that of Protein RecA from Prochlorococcus marinus (strain MIT 9515).